Reading from the N-terminus, the 616-residue chain is Chaperone protein HtpG (616 aa).

Residues methionine 1–arginine 334 are a; substrate-binding. Residues glutamate 335–arginine 549 form a b region. Positions isoleucine 550 to asparagine 616 are c.

The protein belongs to the heat shock protein 90 family. As to quaternary structure, homodimer.

Its subcellular location is the cytoplasm. In terms of biological role, molecular chaperone. Has ATPase activity. The sequence is that of Chaperone protein HtpG from Ruthia magnifica subsp. Calyptogena magnifica.